Consider the following 326-residue polypeptide: Tumor necrosis factor soluble receptor (326 aa).

Positions 1–16 (MFRLTLLLAYVACVYG) are cleaved as a signal peptide. TNFR-Cys repeat units follow at residues 27–62 (KCRG…TVCS), 63–104 (PCKN…DRVC), 105–147 (DCSA…VLCT), and 148–186 (KCPR…TSCT). 10 disulfide bridges follow: cysteine 28-cysteine 39, cysteine 40-cysteine 53, cysteine 43-cysteine 61, cysteine 64-cysteine 79, cysteine 82-cysteine 96, cysteine 86-cysteine 104, cysteine 106-cysteine 120, cysteine 123-cysteine 146, cysteine 129-cysteine 149, and cysteine 164-cysteine 185. N-linked (GlcNAc...) asparagine; by host glycosylation occurs at asparagine 66. Asparagine 181, asparagine 205, and asparagine 238 each carry an N-linked (GlcNAc...) asparagine; by host glycan.

Binds to TNF-alpha and beta. Probably prevents TNF to reach cellular target and thereby deampening the potential antiviral effects of the cytokine. This is Tumor necrosis factor soluble receptor from Oryctolagus cuniculus (Rabbit).